The sequence spans 311 residues: Putative dihydroorotate dehydrogenase A (fumarate) (311 aa).

Substrate-binding positions include Lys45, 69–73 (NSMGL), and Asn128. Position 45–46 (45–46 (KT)) interacts with FMN. An FMN-binding site is contributed by Asn128. The active-site Nucleophile is the Cys131. Residues Lys165 and Val193 each coordinate FMN. 194 to 195 (NS) contacts substrate. FMN is bound by residues Gly220, 248–249 (GG), and 270–271 (GT).

This sequence belongs to the dihydroorotate dehydrogenase family. Type 1 subfamily. As to quaternary structure, homodimer. The cofactor is FMN.

The protein resides in the cytoplasm. The enzyme catalyses (S)-dihydroorotate + fumarate = orotate + succinate. Its pathway is pyrimidine metabolism; UMP biosynthesis via de novo pathway. Functionally, catalyzes the conversion of dihydroorotate to orotate with fumarate as the electron acceptor. The chain is Putative dihydroorotate dehydrogenase A (fumarate) (pyrD) from Streptococcus uberis (strain ATCC BAA-854 / 0140J).